The primary structure comprises 121 residues: Small ribosomal subunit protein uS13 (121 aa).

The interval 92-121 (RKGLPMRGQRTRTNARTRKGPRRAAQALKK) is disordered.

It belongs to the universal ribosomal protein uS13 family. As to quaternary structure, part of the 30S ribosomal subunit. Forms a loose heterodimer with protein S19. Forms two bridges to the 50S subunit in the 70S ribosome.

Functionally, located at the top of the head of the 30S subunit, it contacts several helices of the 16S rRNA. In the 70S ribosome it contacts the 23S rRNA (bridge B1a) and protein L5 of the 50S subunit (bridge B1b), connecting the 2 subunits; these bridges are implicated in subunit movement. Contacts the tRNAs in the A and P-sites. The protein is Small ribosomal subunit protein uS13 of Burkholderia cenocepacia (strain ATCC BAA-245 / DSM 16553 / LMG 16656 / NCTC 13227 / J2315 / CF5610) (Burkholderia cepacia (strain J2315)).